The primary structure comprises 175 residues: ATP synthase subunit b (175 aa).

Residues 20–40 (LIFWTAITFVIVLLILKKIAW) form a helical membrane-spanning segment.

This sequence belongs to the ATPase B chain family. In terms of assembly, F-type ATPases have 2 components, F(1) - the catalytic core - and F(0) - the membrane proton channel. F(1) has five subunits: alpha(3), beta(3), gamma(1), delta(1), epsilon(1). F(0) has four main subunits: a(1), b(2) and c(10-14). The alpha and beta chains form an alternating ring which encloses part of the gamma chain. F(1) is attached to F(0) by a central stalk formed by the gamma and epsilon chains, while a peripheral stalk is formed by the delta and b chains.

The protein resides in the cell inner membrane. In terms of biological role, f(1)F(0) ATP synthase produces ATP from ADP in the presence of a proton or sodium gradient. F-type ATPases consist of two structural domains, F(1) containing the extramembraneous catalytic core and F(0) containing the membrane proton channel, linked together by a central stalk and a peripheral stalk. During catalysis, ATP synthesis in the catalytic domain of F(1) is coupled via a rotary mechanism of the central stalk subunits to proton translocation. Its function is as follows. Component of the F(0) channel, it forms part of the peripheral stalk, linking F(1) to F(0). This Pelodictyon phaeoclathratiforme (strain DSM 5477 / BU-1) protein is ATP synthase subunit b.